The primary structure comprises 381 residues: Cytosolic acyl coenzyme A thioester hydrolase (381 aa).

Positions 51–169 (PGHCIAMGRI…TLWYVPLSLK (119 aa)) constitute a HotDog ACOT-type 1 domain. Asn67 is an active-site residue. An N6-acetyllysine mark is found at Lys169 and Lys199. The 115-residue stretch at 225 to 339 (SYSQSSLIHL…FFTYVSLNQE (115 aa)) folds into the HotDog ACOT-type 2 domain. Asp256 is an active-site residue. Lys284 is subject to N6-acetyllysine. Positions 343–381 (LPVPQLVPETEDEKKRFEEGKGRYLQMKAKRQGHTEPQP) are disordered. Over residues 354-364 (DEKKRFEEGKG) the composition is skewed to basic and acidic residues.

As to quaternary structure, homohexamer. Post-translationally, the N-terminus is blocked. In terms of tissue distribution, isoform 1 is expressed constitutively in brain and testis. Isoform 2 is induced in liver by treatment with the peroxisome proliferator.

The protein localises to the cytoplasm. The protein resides in the cytosol. The enzyme catalyses hexadecanoyl-CoA + H2O = hexadecanoate + CoA + H(+). The catalysed reaction is dodecanoyl-CoA + H2O = dodecanoate + CoA + H(+). It catalyses the reaction tetradecanoyl-CoA + H2O = tetradecanoate + CoA + H(+). It carries out the reaction decanoyl-CoA + H2O = decanoate + CoA + H(+). The enzyme catalyses octanoyl-CoA + H2O = octanoate + CoA + H(+). The catalysed reaction is octadecanoyl-CoA + H2O = octadecanoate + CoA + H(+). It catalyses the reaction (9Z)-octadecenoyl-CoA + H2O = (9Z)-octadecenoate + CoA + H(+). Its pathway is lipid metabolism; fatty acid metabolism. Catalyzes the hydrolysis of acyl-CoAs into free fatty acids and coenzyme A (CoASH), regulating their respective intracellular levels. Preferentially hydrolyzes palmitoyl-CoA, but has a broad specificity acting on other fatty acyl-CoAs with chain-lengths of C8-C18. May play an important physiological function in brain. This chain is Cytosolic acyl coenzyme A thioester hydrolase (Acot7), found in Rattus norvegicus (Rat).